The following is a 231-amino-acid chain: Ribosyldihydronicotinamide dehydrogenase [quinone] (231 aa).

FAD is bound by residues His-12 and 18–21; that span reads FNGS. Residue Ser-80 is modified to Phosphoserine. Residue 104–107 coordinates FAD; that stretch reads LYWF. 127 to 129 contacts substrate; that stretch reads FDI. FAD is bound by residues 148–151 and Tyr-156; that span reads TTGG. Residues His-174 and His-178 each coordinate Zn(2+). Glu-194 lines the FAD pocket. Ser-197 bears the Phosphoserine mark. Arg-201 contacts FAD. Cys-223 serves as a coordination point for Zn(2+).

This sequence belongs to the NAD(P)H dehydrogenase (quinone) family. As to quaternary structure, homodimer. Zn(2+) serves as cofactor. Requires FAD as cofactor.

It localises to the cytoplasm. The catalysed reaction is 1-(beta-D-ribofuranosyl)-1,4-dihydronicotinamide + a quinone + H(+) = beta-nicotinamide D-riboside + a quinol. Its activity is regulated as follows. Inhibited by melatonin, resveratrol and 5-hydroxytryptamine. In terms of biological role, the enzyme apparently serves as a quinone reductase in connection with conjugation reactions of hydroquinones involved in detoxification pathways as well as in biosynthetic processes such as the vitamin K-dependent gamma-carboxylation of glutamate residues in prothrombin synthesis. This is Ribosyldihydronicotinamide dehydrogenase [quinone] (NQO2) from Homo sapiens (Human).